Consider the following 159-residue polypeptide: Transcriptional repressor NrdR (159 aa).

The segment at 3 to 34 is a zinc-finger region; the sequence is CPFCRHEDTQVVDSRVSEDGAAIRRRRRCSAC. An ATP-cone domain is found at 49-139; it reads PAVVKKDGSR…VYRRFEDVSE (91 aa).

The protein belongs to the NrdR family. The cofactor is Zn(2+).

Functionally, negatively regulates transcription of bacterial ribonucleotide reductase nrd genes and operons by binding to NrdR-boxes. This Burkholderia ambifaria (strain MC40-6) protein is Transcriptional repressor NrdR.